A 491-amino-acid chain; its full sequence is Conidiogenone synthase PchP450 (491 aa).

A helical membrane pass occupies residues 2–22 (LLLWFGFFSFVCGLVIYRLQF). Cys-430 contributes to the heme binding site.

Belongs to the cytochrome P450 family. Requires heme as cofactor.

It localises to the membrane. Its pathway is secondary metabolite biosynthesis; terpenoid biosynthesis. Its function is as follows. Cytochrome P450 monooxygenase; part of the gene cluster that mediates the biosynthesis of conidiogenone, a diterpene known to induce the conidiation. The bifunctional terpene synthase PrDS converts isopentenyl diphosphate (IPP) and dimethylallyl diphosphate (DMAPP) into deoxyconidiogenol. The C-terminal prenyltransferase (PT) domain of PrDS catalyzes formation of GGPP, whereas the N-terminal terpene cyclase (TC) domain catalyzes the cyclization of GGPP into deoxyconidiogenol. The cytochrome P450 monooxygenase PrP450 then catalyzes two rounds of oxidation to furnish conidiogenone. The polypeptide is Conidiogenone synthase PchP450 (Penicillium rubens (strain ATCC 28089 / DSM 1075 / NRRL 1951 / Wisconsin 54-1255) (Penicillium chrysogenum)).